We begin with the raw amino-acid sequence, 83 residues long: Small ribosomal subunit protein uS17 (83 aa).

This sequence belongs to the universal ribosomal protein uS17 family. In terms of assembly, part of the 30S ribosomal subunit.

One of the primary rRNA binding proteins, it binds specifically to the 5'-end of 16S ribosomal RNA. The chain is Small ribosomal subunit protein uS17 from Campylobacter jejuni subsp. jejuni serotype O:6 (strain 81116 / NCTC 11828).